A 446-amino-acid chain; its full sequence is 5-hydroxytryptamine receptor (446 aa).

Residues 1 to 65 (MEGAEGQEEL…AALVRAAAKA (65 aa)) are Extracellular-facing. Asparagine 23, asparagine 27, asparagine 36, and asparagine 42 each carry an N-linked (GlcNAc...) asparagine glycan. The helical transmembrane segment at 66–88 (VVLGLLILATVVGNVFVIAAILL) threads the bilayer. Over 89 to 98 (ERHLRSAANN) the chain is Cytoplasmic. Residues 99–120 (LILSLAVADLLVACLVMPLGAV) form a helical membrane-spanning segment. The Extracellular segment spans residues 121–135 (YEVVQRWTLGPELCD). Cysteine 134 and cysteine 214 form a disulfide bridge. Residues 136–157 (MWTSGDVLCCTASILHLVAIAL) form a helical membrane-spanning segment. Residues 158 to 176 (DRYWAVTNIDYIHASTAKR) are Cytoplasmic-facing. Residues 177-199 (VGMMIACVWTVSFFVCIAQLLGW) form a helical membrane-spanning segment. Residues 200–227 (KDPDWNQRVSEDLRCVVSQDVGYQIFAT) are Extracellular-facing. Residues 228 to 249 (ASSFYVPVLIILILYWRIYQTA) form a helical membrane-spanning segment. At 250-367 (RKRIRRRRGA…SKRERKAAKT (118 aa)) the chain is on the cytoplasmic side. A compositionally biased stretch (polar residues) spans 304–324 (TTTGFTNVSSNNTSPEKQSCA). The segment at 304–329 (TTTGFTNVSSNNTSPEKQSCANGLEA) is disordered. The chain crosses the membrane as a helical span at residues 368-391 (LAIITGAFVACWLPFFVLAILVPT). At 392 to 399 (CDCEVSPV) the chain is on the extracellular side. Residues 400–422 (LTSLSLWLGYFNSTLNPVIYTVF) traverse the membrane as a helical segment. Topologically, residues 423-446 (SPEFRHAFQRLLCGRRVRRRRAPQ) are cytoplasmic.

It belongs to the G-protein coupled receptor 1 family.

Its subcellular location is the cell membrane. This is a receptor for 5-hydroxytryptamine (serotonin), a biogenic hormone that function as a neurotransmitter, a hormone, and a mitogen. In Bombyx mori (Silk moth), this protein is 5-hydroxytryptamine receptor.